The primary structure comprises 351 residues: Protein Wnt-4 (351 aa).

Positions 1 to 22 (MSPEYFLRSLLLIILATFSANA) are cleaved as a signal peptide. N-linked (GlcNAc...) asparagine glycans are attached at residues Asn-21 and Asn-88. 11 cysteine pairs are disulfide-bonded: Cys-78–Cys-89, Cys-128–Cys-136, Cys-138–Cys-155, Cys-206–Cys-220, Cys-208–Cys-215, Cys-280–Cys-311, Cys-296–Cys-306, Cys-310–Cys-350, Cys-326–Cys-341, Cys-328–Cys-338, and Cys-333–Cys-334. The O-palmitoleoyl serine; by PORCN moiety is linked to residue Ser-212. Residue Asn-297 is glycosylated (N-linked (GlcNAc...) asparagine).

It belongs to the Wnt family. In terms of assembly, interacts with CPZ. Palmitoleoylation is required for efficient binding to frizzled receptors. Depalmitoleoylation leads to Wnt signaling pathway inhibition. As to expression, predominantly expressed in the diencephalon neuromere D2.

The protein localises to the secreted. It localises to the extracellular space. It is found in the extracellular matrix. Ligand for members of the frizzled family of seven transmembrane receptors. Plays an important role in embryonic development. The chain is Protein Wnt-4 (WNT4) from Gallus gallus (Chicken).